Here is a 193-residue protein sequence, read N- to C-terminus: Potassium-transporting ATPase KdpC subunit (193 aa).

Residues 11–31 (FTLVFMVLLGLVYPFVMTGIA) form a helical membrane-spanning segment.

Belongs to the KdpC family. As to quaternary structure, the system is composed of three essential subunits: KdpA, KdpB and KdpC.

The protein localises to the cell membrane. In terms of biological role, part of the high-affinity ATP-driven potassium transport (or Kdp) system, which catalyzes the hydrolysis of ATP coupled with the electrogenic transport of potassium into the cytoplasm. This subunit acts as a catalytic chaperone that increases the ATP-binding affinity of the ATP-hydrolyzing subunit KdpB by the formation of a transient KdpB/KdpC/ATP ternary complex. This is Potassium-transporting ATPase KdpC subunit from Caldanaerobacter subterraneus subsp. tengcongensis (strain DSM 15242 / JCM 11007 / NBRC 100824 / MB4) (Thermoanaerobacter tengcongensis).